A 530-amino-acid polypeptide reads, in one-letter code: Trigger factor (530 aa).

Residues 162–243 (DDLVTIDLAG…VTKVCEQELP (82 aa)) enclose the PPIase FKBP-type domain. The segment at 432 to 530 (NALELDRIQP…KTAAKDDKSK (99 aa)) is disordered. 2 stretches are compositionally biased toward basic and acidic residues: residues 459-478 (SAEK…EKAP) and 501-512 (KVVDAKSDDKPA).

The protein belongs to the FKBP-type PPIase family. Tig subfamily.

The protein localises to the cytoplasm. The catalysed reaction is [protein]-peptidylproline (omega=180) = [protein]-peptidylproline (omega=0). In terms of biological role, involved in protein export. Acts as a chaperone by maintaining the newly synthesized protein in an open conformation. Functions as a peptidyl-prolyl cis-trans isomerase. The polypeptide is Trigger factor (Cutibacterium acnes (strain DSM 16379 / KPA171202) (Propionibacterium acnes)).